We begin with the raw amino-acid sequence, 575 residues long: 2-isopropylmalate synthase (575 aa).

The 275-residue stretch at 31 to 305 (PTWLSTDLRD…APGLDFSDIA (275 aa)) folds into the Pyruvate carboxyltransferase domain. Residues aspartate 40, histidine 244, histidine 246, and asparagine 280 each contribute to the Mg(2+) site. Residues 437–575 (PVQASPDFSD…RFAGEEQGKG (139 aa)) are regulatory domain.

This sequence belongs to the alpha-IPM synthase/homocitrate synthase family. LeuA type 2 subfamily. In terms of assembly, homodimer. Requires Mg(2+) as cofactor.

It is found in the cytoplasm. The enzyme catalyses 3-methyl-2-oxobutanoate + acetyl-CoA + H2O = (2S)-2-isopropylmalate + CoA + H(+). The protein operates within amino-acid biosynthesis; L-leucine biosynthesis; L-leucine from 3-methyl-2-oxobutanoate: step 1/4. Catalyzes the condensation of the acetyl group of acetyl-CoA with 3-methyl-2-oxobutanoate (2-ketoisovalerate) to form 3-carboxy-3-hydroxy-4-methylpentanoate (2-isopropylmalate). In Herbaspirillum seropedicae (strain SmR1), this protein is 2-isopropylmalate synthase.